We begin with the raw amino-acid sequence, 314 residues long: 3'-5' exoribonuclease YhaM (314 aa).

The HD domain occupies 163–279; it reads HVVSMLDLAK…LHYIDNLDAK (117 aa).

This sequence belongs to the YhaM family.

In terms of biological role, shows a 3'-5' exoribonuclease activity. This Bacillus anthracis (strain CDC 684 / NRRL 3495) protein is 3'-5' exoribonuclease YhaM.